A 244-amino-acid chain; its full sequence is MAVISMKQLLEAGVHFGHQTRRWNPKMDRYIFTERNGIYIIDLQKTVKKVEEAYNFVRELAADGGKVLFVGTKKQAQDSVKEEAERCGMYYINQRWLGGTLTNFETIQKRIDRLKKLEKMEEDGTFDVLPKKEVILLKKEMERLEKFLGGIKDMNSLPDALFVIDPRKERIAIAEAHKLNIPIVAIVDTNCDPDEIDYVIPGNDDAIRAVKLLTGKMADAVVEATSGAGEEAEEVAEVTEETTA.

The protein belongs to the universal ribosomal protein uS2 family.

The sequence is that of Small ribosomal subunit protein uS2 from Halalkalibacterium halodurans (strain ATCC BAA-125 / DSM 18197 / FERM 7344 / JCM 9153 / C-125) (Bacillus halodurans).